A 319-amino-acid polypeptide reads, in one-letter code: Methionyl-tRNA formyltransferase (319 aa).

Residue 112–115 participates in (6S)-5,6,7,8-tetrahydrofolate binding; sequence SLLP.

Belongs to the Fmt family.

It carries out the reaction L-methionyl-tRNA(fMet) + (6R)-10-formyltetrahydrofolate = N-formyl-L-methionyl-tRNA(fMet) + (6S)-5,6,7,8-tetrahydrofolate + H(+). Functionally, attaches a formyl group to the free amino group of methionyl-tRNA(fMet). The formyl group appears to play a dual role in the initiator identity of N-formylmethionyl-tRNA by promoting its recognition by IF2 and preventing the misappropriation of this tRNA by the elongation apparatus. In Pelobacter propionicus (strain DSM 2379 / NBRC 103807 / OttBd1), this protein is Methionyl-tRNA formyltransferase.